Here is a 410-residue protein sequence, read N- to C-terminus: NIPA-like protein 3 (410 aa).

The interval 1-24 (MDGAHSAGLQLQPLPPTSGATSTS) is disordered. The next 9 helical transmembrane spans lie at 37–57 (NLIGALLAIFGHLVVSIALNL), 80–100 (WWLGLLLLLLGELGVFASYAF), 105–125 (LIVPLSAVSVIASAIIGIIFI), 139–159 (VLSFVGCGLAIVGTYLLVTFA), 175–195 (LVSWPFLLYMLVAIVLFCLLL), 206–226 (IVVILLLVALLGSMTVVTVKA), 244–264 (PIFYVMFVCMVATAIYQATFL), 275–295 (LIASVGYILSTTAAITAGAIF), and 304–324 (ALHICMFALGCLIAFLGVFLI). Ser376 carries the post-translational modification Phosphoserine. The tract at residues 389-410 (EEHSSRSTPGVPYRVLEHTKKE) is disordered.

It belongs to the NIPA family.

Its subcellular location is the membrane. This is NIPA-like protein 3 (Nipal3) from Mus musculus (Mouse).